The chain runs to 476 residues: H2.0-like homeobox protein (476 aa).

Disordered regions lie at residues His-121 to Asp-170, Trp-328 to Thr-401, and Thr-413 to Leu-476. The span at His-158–Ser-168 shows a compositional bias: low complexity. A DNA-binding region (homeobox) is located at residues Arg-273 to Lys-332. Basic and acidic residues-rich tracts occupy residues Ser-331–Glu-346 and Glu-355–Gly-368. The segment covering Glu-369–Ser-379 has biased composition (acidic residues). A compositionally biased stretch (basic and acidic residues) spans Asp-386–Leu-397. The span at Thr-413–Ser-446 shows a compositional bias: low complexity. Over residues His-455–Gln-464 the composition is skewed to polar residues.

This sequence belongs to the H2.0 homeobox family.

The protein resides in the nucleus. Functionally, transcription factor required for TBX21/T-bet-dependent maturation of Th1 cells as well as maintenance of Th1-specific gene expression. Involved in embryogenesis and hematopoiesis. This chain is H2.0-like homeobox protein (Hlx), found in Rattus norvegicus (Rat).